A 971-amino-acid chain; its full sequence is Valine--tRNA ligase (971 aa).

The 'HIGH' region motif lies at 55 to 65 (PNVTGSLHMGH). Residues 572-576 (KMSKS) carry the 'KMSKS' region motif. Lysine 575 is a binding site for ATP. The stretch at 906-933 (KAELGRLQKDLDKVQKQHDQIASKLANE) forms a coiled coil.

Belongs to the class-I aminoacyl-tRNA synthetase family. ValS type 1 subfamily. Monomer.

The protein resides in the cytoplasm. The catalysed reaction is tRNA(Val) + L-valine + ATP = L-valyl-tRNA(Val) + AMP + diphosphate. In terms of biological role, catalyzes the attachment of valine to tRNA(Val). As ValRS can inadvertently accommodate and process structurally similar amino acids such as threonine, to avoid such errors, it has a 'posttransfer' editing activity that hydrolyzes mischarged Thr-tRNA(Val) in a tRNA-dependent manner. The sequence is that of Valine--tRNA ligase from Acinetobacter baylyi (strain ATCC 33305 / BD413 / ADP1).